We begin with the raw amino-acid sequence, 70 residues long: MASNAAVPFWRAAGMTYITYSNLCANMVRNCLKEPYRAEALSREKVHFSFSKWVDGKPQKPAIRSDTGEE.

Belongs to the eukaryotic ATPase epsilon family. As to quaternary structure, F-type ATPases have 2 components, CF(1) - the catalytic core - and CF(0) - the membrane proton channel. CF(1) has five subunits: alpha(3), beta(3), gamma(1), delta(1), epsilon(1). CF(0) has three main subunits: a, b and c.

It localises to the mitochondrion. The protein localises to the mitochondrion inner membrane. Mitochondrial membrane ATP synthase (F(1)F(0) ATP synthase or Complex V) produces ATP from ADP in the presence of a proton gradient across the membrane which is generated by electron transport complexes of the respiratory chain. F-type ATPases consist of two structural domains, F(1) - containing the extramembraneous catalytic core, and F(0) - containing the membrane proton channel, linked together by a central stalk and a peripheral stalk. During catalysis, ATP synthesis in the catalytic domain of F(1) is coupled via a rotary mechanism of the central stalk subunits to proton translocation. Part of the complex F(1) domain and of the central stalk which is part of the complex rotary element. Rotation of the central stalk against the surrounding alpha(3)beta(3) subunits leads to hydrolysis of ATP in three separate catalytic sites on the beta subunits. The protein is ATP synthase subunit epsilon, mitochondrial of Ipomoea batatas (Sweet potato).